A 1121-amino-acid polypeptide reads, in one-letter code: Cilia- and flagella-associated protein 70 (1121 aa).

Residues asparagine 410–proline 428 are compositionally biased toward basic and acidic residues. The disordered stretch occupies residues asparagine 410 to glycine 457. 3 TPR repeats span residues serine 635–asparagine 668, leucine 669–histidine 702, and histidine 704–asparagine 736. Disordered stretches follow at residues lysine 778–isoleucine 802 and glutamine 836–serine 858. TPR repeat units follow at residues cysteine 929–asparagine 962, proline 963–alanine 996, histidine 1000–cysteine 1033, threonine 1035–asparagine 1066, and glutamate 1068–aspartate 1100.

This sequence belongs to the CFAP70 family. As to expression, expressed in testis.

The protein resides in the cell projection. It localises to the cilium. Its subcellular location is the flagellum. It is found in the cytoplasm. The protein localises to the cytoskeleton. The protein resides in the flagellum basal body. It localises to the cilium axoneme. Its function is as follows. Axoneme-binding protein that plays a role in the regulation of ciliary motility and cilium length. This is Cilia- and flagella-associated protein 70 from Homo sapiens (Human).